Reading from the N-terminus, the 266-residue chain is 3-methyl-2-oxobutanoate hydroxymethyltransferase (266 aa).

Residues Asp45 and Asp84 each contribute to the Mg(2+) site. Residues 45–46 (DS), Asp84, and Lys113 each bind 3-methyl-2-oxobutanoate. Glu115 provides a ligand contact to Mg(2+). The Proton acceptor role is filled by Glu183.

Belongs to the PanB family. As to quaternary structure, homodecamer; pentamer of dimers. Mg(2+) is required as a cofactor.

It localises to the cytoplasm. The catalysed reaction is 3-methyl-2-oxobutanoate + (6R)-5,10-methylene-5,6,7,8-tetrahydrofolate + H2O = 2-dehydropantoate + (6S)-5,6,7,8-tetrahydrofolate. The protein operates within cofactor biosynthesis; (R)-pantothenate biosynthesis; (R)-pantoate from 3-methyl-2-oxobutanoate: step 1/2. Catalyzes the reversible reaction in which hydroxymethyl group from 5,10-methylenetetrahydrofolate is transferred onto alpha-ketoisovalerate to form ketopantoate. The sequence is that of 3-methyl-2-oxobutanoate hydroxymethyltransferase from Coxiella burnetii (strain Dugway 5J108-111).